Here is a 148-residue protein sequence, read N- to C-terminus: Nucleoside diphosphate kinase (148 aa).

The ATP site is built by lysine 9, phenylalanine 57, arginine 85, threonine 91, arginine 102, and asparagine 112. Histidine 115 acts as the Pros-phosphohistidine intermediate in catalysis.

Belongs to the NDK family. Mg(2+) is required as a cofactor.

The enzyme catalyses a 2'-deoxyribonucleoside 5'-diphosphate + ATP = a 2'-deoxyribonucleoside 5'-triphosphate + ADP. It carries out the reaction a ribonucleoside 5'-diphosphate + ATP = a ribonucleoside 5'-triphosphate + ADP. In terms of biological role, major role in the synthesis of nucleoside triphosphates other than ATP. The ATP gamma phosphate is transferred to the NDP beta phosphate via a ping-pong mechanism, using a phosphorylated active-site intermediate. The protein is Nucleoside diphosphate kinase of Helianthus annuus (Common sunflower).